Here is a 62-residue protein sequence, read N- to C-terminus: Large ribosomal subunit protein uL30 (62 aa).

Belongs to the universal ribosomal protein uL30 family. Part of the 50S ribosomal subunit.

This chain is Large ribosomal subunit protein uL30, found in Thioalkalivibrio sulfidiphilus (strain HL-EbGR7).